We begin with the raw amino-acid sequence, 321 residues long: Gibberellin 2-beta-dioxygenase 4 (321 aa).

A Fe2OG dioxygenase domain is found at 156–269 (DSDSVLRVNH…RLSTAYFAGP (114 aa)). Fe cation contacts are provided by His-193, Asp-195, and His-250. Arg-260 is an active-site residue.

This sequence belongs to the iron/ascorbate-dependent oxidoreductase family. GA2OX subfamily. It depends on Fe(2+) as a cofactor. Expressed at the base of the shoot apical meristem and developing leaf primordia.

It carries out the reaction gibberellin A1 + 2-oxoglutarate + O2 = gibberellin A8 + succinate + CO2. The protein operates within plant hormone biosynthesis; gibberellin biosynthesis. Catalyzes the 2-beta-hydroxylation of several biologically active gibberellins, leading to the homeostatic regulation of their endogenous level. Catabolism of gibberellins (GAs) plays a central role in plant development. Converts GA9/GA20 to GA51/GA29 and GA4/GA1 to GA34/GA8. The chain is Gibberellin 2-beta-dioxygenase 4 (GA2OX4) from Arabidopsis thaliana (Mouse-ear cress).